The chain runs to 458 residues: tRNA modification GTPase MnmE (458 aa).

The (6S)-5-formyl-5,6,7,8-tetrahydrofolate site is built by R26, E88, and R127. In terms of domain architecture, TrmE-type G spans G224–F378. N234 serves as a coordination point for K(+). GTP-binding positions include N234 to S239, T253 to T259, and D278 to G281. Position 238 (S238) interacts with Mg(2+). The K(+) site is built by T253, I255, and T258. Residue T259 participates in Mg(2+) binding. K458 is a (6S)-5-formyl-5,6,7,8-tetrahydrofolate binding site.

Belongs to the TRAFAC class TrmE-Era-EngA-EngB-Septin-like GTPase superfamily. TrmE GTPase family. In terms of assembly, homodimer. Heterotetramer of two MnmE and two MnmG subunits. The cofactor is K(+).

It is found in the cytoplasm. Functionally, exhibits a very high intrinsic GTPase hydrolysis rate. Involved in the addition of a carboxymethylaminomethyl (cmnm) group at the wobble position (U34) of certain tRNAs, forming tRNA-cmnm(5)s(2)U34. This Streptococcus pyogenes serotype M4 (strain MGAS10750) protein is tRNA modification GTPase MnmE.